Here is a 216-residue protein sequence, read N- to C-terminus: ATP-dependent Clp protease proteolytic subunit (216 aa).

The active-site Nucleophile is the Ser-101. His-126 is an active-site residue.

This sequence belongs to the peptidase S14 family. In terms of assembly, component of the chloroplastic Clp protease core complex.

The protein resides in the plastid. It is found in the chloroplast stroma. It catalyses the reaction Hydrolysis of proteins to small peptides in the presence of ATP and magnesium. alpha-casein is the usual test substrate. In the absence of ATP, only oligopeptides shorter than five residues are hydrolyzed (such as succinyl-Leu-Tyr-|-NHMec, and Leu-Tyr-Leu-|-Tyr-Trp, in which cleavage of the -Tyr-|-Leu- and -Tyr-|-Trp bonds also occurs).. Cleaves peptides in various proteins in a process that requires ATP hydrolysis. Has a chymotrypsin-like activity. Plays a major role in the degradation of misfolded proteins. This is ATP-dependent Clp protease proteolytic subunit from Oryza nivara (Indian wild rice).